The following is a 274-amino-acid chain: Kit ligand (274 aa).

An N-terminal signal peptide occupies residues 1 to 25 (MKKTQTWIITCIYLQLLLFNPLVHT). The residue at position 26 (Gln26) is a Pyrrolidone carboxylic acid. The Extracellular portion of the chain corresponds to 26–215 (QGICSNRVTD…SNSIEDSSLQ (190 aa)). 2 cysteine pairs are disulfide-bonded: Cys29-Cys114 and Cys68-Cys164. Asn90, Asn145, and Asn196 each carry an N-linked (GlcNAc...) asparagine glycan. The chain crosses the membrane as a helical span at residues 216–238 (WAAVALPAFFSLVIGFAFGAFYW). The Cytoplasmic portion of the chain corresponds to 239 to 274 (KKKQPNLTRTVENRQINEEDNEISMLQEKEREFQEV).

It belongs to the SCF family. As to quaternary structure, homodimer, non-covalently linked. In terms of processing, a soluble form is produced by proteolytic processing of isoform 1 in the extracellular domain.

The protein resides in the cell membrane. It localises to the cytoplasm. The protein localises to the cytoskeleton. It is found in the cell projection. Its subcellular location is the lamellipodium. The protein resides in the filopodium. It localises to the secreted. Stimulates the proliferation of mast cells. Able to augment the proliferation of both myeloid and lymphoid hematopoietic progenitors in bone marrow culture. Also mediates cell-cell adhesion. Acts synergistically with other cytokines, probably interleukins. The chain is Kit ligand (KITLG) from Bos taurus (Bovine).